A 219-amino-acid chain; its full sequence is Counting factor-associated protein C (219 aa).

The N-terminal stretch at 1 to 16 (MKVLILLVSLISVCFS) is a signal peptide. N-linked (GlcNAc...) asparagine glycosylation is found at asparagine 74 and asparagine 123.

It localises to the secreted. The sequence is that of Counting factor-associated protein C (cfaC) from Dictyostelium discoideum (Social amoeba).